A 150-amino-acid polypeptide reads, in one-letter code: 3-dehydroquinate dehydratase (150 aa).

Residue Tyr23 is the Proton acceptor of the active site. The substrate site is built by Asn79, His85, and Asp92. His105 (proton donor) is an active-site residue. Substrate-binding positions include Ile106–Ser107 and Arg116.

This sequence belongs to the type-II 3-dehydroquinase family. In terms of assembly, homododecamer.

The enzyme catalyses 3-dehydroquinate = 3-dehydroshikimate + H2O. It participates in metabolic intermediate biosynthesis; chorismate biosynthesis; chorismate from D-erythrose 4-phosphate and phosphoenolpyruvate: step 3/7. Its function is as follows. Catalyzes a trans-dehydration via an enolate intermediate. The sequence is that of 3-dehydroquinate dehydratase from Marinomonas sp. (strain MWYL1).